Here is a 104-residue protein sequence, read N- to C-terminus: Large ribosomal subunit protein bL21 (104 aa).

It belongs to the bacterial ribosomal protein bL21 family. As to quaternary structure, part of the 50S ribosomal subunit. Contacts protein L20.

This protein binds to 23S rRNA in the presence of protein L20. The sequence is that of Large ribosomal subunit protein bL21 from Gluconobacter oxydans (strain 621H) (Gluconobacter suboxydans).